Consider the following 503-residue polypeptide: MEEFQRYLELDRSQQHYFLYPLIFQEYIYALAHDHGLNINRSILLENAGYDNKFSLLIVKRLIARMYQQNHLILSTNDSNQNRFLRRNKNLYSQMISEGFAVIVEIPFYLQLKSSLESKGIVKSHNLRSIHSIFPFLEDKISHLIYGLEILIPYPVHLEILVQTLRYWVKDASSLHLLRFFLHEYCNWNTPNKAGSSFSKRNQRLFFLLYNSHLCEYESIFIFLRNQSSHLRSTSSGTLLERIYFYGKIKYLVKVFVKAFQVNLLLLKDPFMHYVRYQGKSILASKGTPFLMKKWTYYFVNLWQCHFYLWSQPGRICINQLYNHSLDILGYLSSARLNPSMVRGQMLENSFLIDNAINKFDAIVPIIPLIGSLAKAKFCNVLGHPISKAVWTDLSDSDIIDQFGRICRNLSHYHSGSSQKKSLYRIKYILRLSCARTLARKHKSTVRAFLKRLGSGLLEEFFTAEEQVLYLTFPRASSASQRLYRRRIWYLDIICINDLANHE.

This sequence belongs to the intron maturase 2 family. MatK subfamily.

It localises to the plastid. Its subcellular location is the chloroplast. In terms of biological role, usually encoded in the trnK tRNA gene intron. Probably assists in splicing its own and other chloroplast group II introns. In Panax ginseng (Korean ginseng), this protein is Maturase K.